Here is a 294-residue protein sequence, read N- to C-terminus: Golgi to ER traffic protein 2 (294 aa).

The tract at residues methionine 1 to aspartate 104 is disordered. The Cytoplasmic segment spans residues methionine 1–asparagine 166. Basic residues predominate over residues lysine 12 to lysine 21. Polar residues predominate over residues isoleucine 34–aspartate 65. Over residues lysine 85–glutamine 95 the composition is skewed to basic and acidic residues. The chain crosses the membrane as a helical span at residues leucine 167–leucine 187. Residues threonine 188–asparagine 205 lie on the Lumenal side of the membrane. The chain crosses the membrane as a helical span at residues phenylalanine 206–leucine 225. Residues glutamine 226 to aspartate 272 are Cytoplasmic-facing. A helical transmembrane segment spans residues valine 273–leucine 293. A topological domain (lumenal) is located at residue isoleucine 294.

Belongs to the GET2 family. As to quaternary structure, component of the Golgi to ER traffic (GET) complex, which is composed of GET1, GET2 and GET3. Within the complex, GET1 and GET2 form a heterotetramer which is stabilized by phosphatidylinositol binding and which binds to the GET3 homodimer.

The protein resides in the endoplasmic reticulum membrane. The protein localises to the golgi apparatus membrane. Functionally, required for the post-translational delivery of tail-anchored (TA) proteins to the endoplasmic reticulum. Together with GET1, acts as a membrane receptor for soluble GET3, which recognizes and selectively binds the transmembrane domain of TA proteins in the cytosol. The GET complex cooperates with the HDEL receptor ERD2 to mediate the ATP-dependent retrieval of resident ER proteins that contain a C-terminal H-D-E-L retention signal from the Golgi to the ER. This chain is Golgi to ER traffic protein 2, found in Vanderwaltozyma polyspora (strain ATCC 22028 / DSM 70294 / BCRC 21397 / CBS 2163 / NBRC 10782 / NRRL Y-8283 / UCD 57-17) (Kluyveromyces polysporus).